The primary structure comprises 754 residues: Lysophospholipase 3 (754 aa).

The first 19 residues, 1-19, serve as a signal peptide directing secretion; that stretch reads MKVNLKLIIGSILISQAQA. Low complexity-rich tracts occupy residues 25–40 and 50–88; these read SSGS…SETG and LFGS…SSNS. The segment at 25 to 88 is disordered; that stretch reads SSGSSSSSDS…DSSLFSSSNS (64 aa). Residues Asn112, Asn156, Asn174, Asn317, Asn325, Asn354, Asn391, Asn423, Asn470, Asn510, Asn515, Asn560, Asn577, Asn597, Asn625, and Asn631 are each glycosylated (N-linked (GlcNAc...) asparagine). One can recognise a PLA2c domain in the interval 114–670; the sequence is TCPSKKTFIR…QEYCWTGGFK (557 aa). The span at 687–721 shows a compositional bias: low complexity; the sequence is KTHTSGGTSSTTQQTSTTTGSSANGGSSSTGSSSS. The disordered stretch occupies residues 687-727; that stretch reads KTHTSGGTSSTTQQTSTTTGSSANGGSSSTGSSSSSKKKNG.

Belongs to the lysophospholipase family.

The protein localises to the secreted. The enzyme catalyses a 1-acyl-sn-glycero-3-phosphocholine + H2O = sn-glycerol 3-phosphocholine + a fatty acid + H(+). Functionally, catalyzes the release of fatty acids from lysophospholipids. Phospholipase B may well contribute to pathogenicity by abetting the fungus in damaging and traversing host cell membranes, processes which likely increase the rapidity of disseminated infection. This chain is Lysophospholipase 3 (PLB3), found in Candida albicans (Yeast).